The primary structure comprises 337 residues: MNPQPLRPVIYDEGRDVVRVLDQRRLPSEEVWLDLASCDEVVQAIKDLTVRGAPAIGVAAAYGLALESRRGAEPARLREASERLVHARPTAVNLAWAVRRMSRRLGLGPAALLEEAHAIRDEDEAACRRIGALGAALLPPRASVLTHCNAGALATAGYGTALGVVRAAVEGGNPVTVFADETRPFLQGARLTAWELKRDGIPVTLLTDNMAGWLMAQGEIACVVVGADRIAANGDVANKIGTYALAVLAAYHHLPFYVAAPWSTVDLATPDGSAIPIEERGDEEVVTLAGQRIAPAGVPARYPAFDVTPEPLVTAIITERGVVRRPFAPGLAALAAR.

Substrate contacts are provided by residues 51 to 53 (RGA), arginine 88, and glutamine 187. Catalysis depends on aspartate 228, which acts as the Proton donor. A substrate-binding site is contributed by 238–239 (NK).

The protein belongs to the eIF-2B alpha/beta/delta subunits family. MtnA subfamily.

It carries out the reaction 5-(methylsulfanyl)-alpha-D-ribose 1-phosphate = 5-(methylsulfanyl)-D-ribulose 1-phosphate. The protein operates within amino-acid biosynthesis; L-methionine biosynthesis via salvage pathway; L-methionine from S-methyl-5-thio-alpha-D-ribose 1-phosphate: step 1/6. Catalyzes the interconversion of methylthioribose-1-phosphate (MTR-1-P) into methylthioribulose-1-phosphate (MTRu-1-P). The polypeptide is Methylthioribose-1-phosphate isomerase (Anaeromyxobacter sp. (strain Fw109-5)).